Consider the following 302-residue polypeptide: Mas-related G-protein coupled receptor member A3 (302 aa).

Topologically, residues 1-17 (MNETIPGSIDIETLIPD) are extracellular. Residue N2 is glycosylated (N-linked (GlcNAc...) asparagine). A helical transmembrane segment spans residues 18-38 (LMIIIFGLVGLTGNAIVFWLL). The Cytoplasmic portion of the chain corresponds to 39-46 (GFRMHRTA). Residues 47 to 67 (FLVYILNLALADFLFLLCHII) form a helical membrane-spanning segment. A glycan (N-linked (GlcNAc...) asparagine) is linked at N68. The Extracellular portion of the chain corresponds to 68 to 81 (NSTVDLLKFTLPKG). A helical transmembrane segment spans residues 82-102 (IFAFCFHTIKRVLYITGLSML). Residues 103 to 129 (SAISTERCLSVLCPIWYHCRRPEHTST) lie on the Cytoplasmic side of the membrane. The chain crosses the membrane as a helical span at residues 130-150 (VMCAVIWVLSLLICILDGYFC). Residues 151–167 (GYLDNHYFNYSVCQAWD) are Extracellular-facing. A glycan (N-linked (GlcNAc...) asparagine) is linked at N159. A helical transmembrane segment spans residues 168–188 (IFIGAYLMFLFVVLCLSTLAL). The Cytoplasmic portion of the chain corresponds to 189-211 (LARLFCGARNMKFTRLFVTIMLT). The chain crosses the membrane as a helical span at residues 212–232 (VLVFLLCGLPWGITWFLLFWI). Over 233-242 (APGVFVLDYS) the chain is Extracellular. Residues 243–263 (PLLVLTAINSCANPIIYFFVG) traverse the membrane as a helical segment. Residues 264–302 (SFRQRLNKQTLKMVLQKALQDTPETPENMVEMSRNKAEP) lie on the Cytoplasmic side of the membrane.

It belongs to the G-protein coupled receptor 1 family. Mas subfamily. As to expression, expressed exclusively in dorsal root ganglia and nodose ganglia. Expressed in a subset of sensory neurons that includes nociceptors. Expressed in the subclass of non-peptidergic sensory neurons that are IB4(+) and VR1(-).

Its subcellular location is the cell membrane. Functionally, orphan receptor. May be a receptor for RFamide-family neuropeptides such as NPFF and NPAF, which are analgesic in vivo. May regulate nociceptor function and/or development, including the sensation or modulation of pain. Activated by the antimalarial drug chloroquine. Mediates chloroquine-induced itch, in a histamine-independent manner. This Mus musculus (Mouse) protein is Mas-related G-protein coupled receptor member A3 (Mrgpra3).